A 130-amino-acid chain; its full sequence is Small ribosomal subunit protein uS11 (130 aa).

The protein belongs to the universal ribosomal protein uS11 family. As to quaternary structure, part of the 30S ribosomal subunit. Interacts with proteins S7 and S18. Binds to IF-3.

In terms of biological role, located on the platform of the 30S subunit, it bridges several disparate RNA helices of the 16S rRNA. Forms part of the Shine-Dalgarno cleft in the 70S ribosome. This Caldicellulosiruptor bescii (strain ATCC BAA-1888 / DSM 6725 / KCTC 15123 / Z-1320) (Anaerocellum thermophilum) protein is Small ribosomal subunit protein uS11.